The chain runs to 485 residues: Zinc finger protein 165 (485 aa).

Lys-23 is covalently cross-linked (Glycyl lysine isopeptide (Lys-Gly) (interchain with G-Cter in SUMO2)). The region spanning 62 to 127 (GPREALSRLR…EEAVTILEDL (66 aa)) is the SCAN box domain. Glycyl lysine isopeptide (Lys-Gly) (interchain with G-Cter in SUMO2) cross-links involve residues Lys-162 and Lys-195. The C2H2-type 1; degenerate zinc-finger motif lies at 290-314 (KSCKHGTCDQSFKWNSDFINHQIIY). 5 C2H2-type zinc fingers span residues 344-366 (HQCNECGKAFRHSSKLARHQRIH), 372-394 (YECNECGKSFAESSDLTRHRRIH), 400-422 (FGCKECGRAFNLNSHLIRHQRIH), 428-450 (YECSECGKTFRVSSHLIRHFRIH), and 456-478 (YECSECGRAFSQSSNLSQHQRIH).

This sequence belongs to the krueppel C2H2-type zinc-finger protein family. In terms of tissue distribution, expressed specifically in testis.

The protein localises to the nucleus. Functionally, may be involved in transcriptional regulation. In Homo sapiens (Human), this protein is Zinc finger protein 165 (ZNF165).